A 235-amino-acid polypeptide reads, in one-letter code: Phosphoribosylaminoimidazole-succinocarboxamide synthase (235 aa).

It belongs to the SAICAR synthetase family.

The enzyme catalyses 5-amino-1-(5-phospho-D-ribosyl)imidazole-4-carboxylate + L-aspartate + ATP = (2S)-2-[5-amino-1-(5-phospho-beta-D-ribosyl)imidazole-4-carboxamido]succinate + ADP + phosphate + 2 H(+). Its pathway is purine metabolism; IMP biosynthesis via de novo pathway; 5-amino-1-(5-phospho-D-ribosyl)imidazole-4-carboxamide from 5-amino-1-(5-phospho-D-ribosyl)imidazole-4-carboxylate: step 1/2. The chain is Phosphoribosylaminoimidazole-succinocarboxamide synthase from Streptococcus pneumoniae serotype 2 (strain D39 / NCTC 7466).